The following is a 252-amino-acid chain: Imidazole glycerol phosphate synthase subunit HisF (252 aa).

Catalysis depends on residues Asp-11 and Asp-130.

Belongs to the HisA/HisF family. Heterodimer of HisH and HisF.

The protein resides in the cytoplasm. It catalyses the reaction 5-[(5-phospho-1-deoxy-D-ribulos-1-ylimino)methylamino]-1-(5-phospho-beta-D-ribosyl)imidazole-4-carboxamide + L-glutamine = D-erythro-1-(imidazol-4-yl)glycerol 3-phosphate + 5-amino-1-(5-phospho-beta-D-ribosyl)imidazole-4-carboxamide + L-glutamate + H(+). Its pathway is amino-acid biosynthesis; L-histidine biosynthesis; L-histidine from 5-phospho-alpha-D-ribose 1-diphosphate: step 5/9. IGPS catalyzes the conversion of PRFAR and glutamine to IGP, AICAR and glutamate. The HisF subunit catalyzes the cyclization activity that produces IGP and AICAR from PRFAR using the ammonia provided by the HisH subunit. The protein is Imidazole glycerol phosphate synthase subunit HisF of Staphylococcus aureus (strain MRSA252).